We begin with the raw amino-acid sequence, 334 residues long: Protein-methionine-sulfoxide reductase catalytic subunit MsrP (334 aa).

A signal peptide (tat-type signal) is located at residues methionine 1–alanine 44. Mo-molybdopterin contacts are provided by residues asparagine 88, tyrosine 91–glutamate 92, cysteine 146, threonine 181, asparagine 233, arginine 238, and glycine 249–lysine 251.

The protein belongs to the MsrP family. In terms of assembly, heterodimer of a catalytic subunit (MsrP) and a heme-binding subunit (MsrQ). It depends on Mo-molybdopterin as a cofactor. Predicted to be exported by the Tat system. The position of the signal peptide cleavage has not been experimentally proven.

It is found in the periplasm. It carries out the reaction L-methionyl-[protein] + a quinone + H2O = L-methionyl-(S)-S-oxide-[protein] + a quinol. The catalysed reaction is L-methionyl-[protein] + a quinone + H2O = L-methionyl-(R)-S-oxide-[protein] + a quinol. Functionally, part of the MsrPQ system that repairs oxidized periplasmic proteins containing methionine sulfoxide residues (Met-O), using respiratory chain electrons. Thus protects these proteins from oxidative-stress damage caused by reactive species of oxygen and chlorine generated by the host defense mechanisms. MsrPQ is essential for the maintenance of envelope integrity under bleach stress, rescuing a wide series of structurally unrelated periplasmic proteins from methionine oxidation, including the primary periplasmic chaperone SurA and the lipoprotein Pal. The catalytic subunit MsrP is non-stereospecific, being able to reduce both (R-) and (S-) diastereoisomers of methionine sulfoxide. The protein is Protein-methionine-sulfoxide reductase catalytic subunit MsrP of Escherichia fergusonii (strain ATCC 35469 / DSM 13698 / CCUG 18766 / IAM 14443 / JCM 21226 / LMG 7866 / NBRC 102419 / NCTC 12128 / CDC 0568-73).